Here is a 310-residue protein sequence, read N- to C-terminus: Solute carrier family 25 member 47 (310 aa).

Solcar repeat units lie at residues 1–80, 93–208, and 217–304; these read MDFV…CLAH, PTKA…LCEW, and PDVL…VLRL. 6 consecutive transmembrane segments (helical) span residues 3–23, 55–75, 98–114, 194–210, 219–239, and 280–298; these read FVAG…LDTV, GLSL…GTYH, ITLS…FLTS, SFAT…EWLT, VLGV…VATP, and LALN…FVAY.

The protein belongs to the mitochondrial carrier (TC 2.A.29) family. As to expression, specifically expressed in liver (at protein level).

The protein localises to the mitochondrion inner membrane. It is found in the mitochondrion outer membrane. It carries out the reaction NAD(+)(in) = NAD(+)(out). The enzyme catalyses acetyl-CoA(in) = acetyl-CoA(out). Functionally, mitochondrial NAD(+) transporter that acts as a 'metabolic gate' in hepatic lipogenesis. Provides NAD(+) substrate to mitochondrial SIRT3 deacetylase and enables its NAD(+)-dependent activities in mitochondrial energy metabolism. This triggers downstream activation of PRKAA1/AMPK-alpha signaling cascade that negatively regulates sterol regulatory element-binding protein (SREBP) transcriptional activities and ATP-consuming lipogenesis to restore cellular energy balance. May transport other mitochondrial metabolites having an aromatic nucleotide and phosphate groups, such as acetyl-CoA. Does not transport amino acids. The transport mechanism remains to be elucidated. The polypeptide is Solute carrier family 25 member 47 (Mus musculus (Mouse)).